The chain runs to 538 residues: D-alanyl-D-alanine carboxypeptidase (538 aa).

The interval 1-21 (MKQSSPEPLRPRRTGGRGGAR) is disordered. An N-terminal signal peptide occupies residues 1 to 49 (MKQSSPEPLRPRRTGGRGGARRAAALVTIPLLPMTLLGASPALADASGA). Residue Ser-98 is the Acyl-ester intermediate of the active site. The active-site Proton acceptor is the Lys-101. The interval 146–319 (TLSAEDLDAM…KGDVGLGGVP (174 aa)) is absent in class-A beta-lactamases. Residue Ser-347 is part of the active site. Lys-459 contacts substrate. The propeptide at 516–538 (GARMMRGPVQGSGELECSWVQAC) is removed in mature form.

This sequence belongs to the peptidase S13 family.

It is found in the secreted. It carries out the reaction Preferential cleavage: (Ac)2-L-Lys-D-Ala-|-D-Ala. Also transpeptidation of peptidyl-alanyl moieties that are N-acyl substituents of D-alanine.. Its pathway is cell wall biogenesis; peptidoglycan biosynthesis. With respect to regulation, inhibited by benzylpenicillin, cephaloridine, ampicillin and cetiofur. Its function is as follows. Removes C-terminal D-alanyl residues from sugar-peptide cell wall precursors. The polypeptide is D-alanyl-D-alanine carboxypeptidase (dac) (Actinomadura sp. (strain R39)).